The sequence spans 334 residues: ELMO domain-containing protein 1 (334 aa).

Positions 133–314 (QHEEMLLKLW…KFRKRIIKQL (182 aa)) constitute an ELMO domain.

Its function is as follows. Acts as a GTPase-activating protein (GAP) toward guanine nucleotide exchange factors like ARL2, ARL3, ARF1 and ARF6, but not for GTPases outside the Arf family. In Homo sapiens (Human), this protein is ELMO domain-containing protein 1 (ELMOD1).